A 60-amino-acid polypeptide reads, in one-letter code: Large ribosomal subunit protein bL33 (60 aa).

Belongs to the bacterial ribosomal protein bL33 family.

This is Large ribosomal subunit protein bL33 from Pelodictyon phaeoclathratiforme (strain DSM 5477 / BU-1).